The sequence spans 1072 residues: Isoleucine--tRNA ligase, cytoplasmic (1072 aa).

Residues 47 to 57 carry the 'HIGH' region motif; sequence PFATGTPHYGH. Residue Lys486 forms a Glycyl lysine isopeptide (Lys-Gly) (interchain with G-Cter in ubiquitin) linkage. The short motif at 602-606 is the 'KMSKS' region element; sequence KMSKS. Lys605 is an ATP binding site. Phosphoserine occurs at positions 829 and 1059.

The protein belongs to the class-I aminoacyl-tRNA synthetase family.

It localises to the cytoplasm. It carries out the reaction tRNA(Ile) + L-isoleucine + ATP = L-isoleucyl-tRNA(Ile) + AMP + diphosphate. This Saccharomyces cerevisiae (strain ATCC 204508 / S288c) (Baker's yeast) protein is Isoleucine--tRNA ligase, cytoplasmic (ILS1).